Here is a 187-residue protein sequence, read N- to C-terminus: Cytokinin riboside 5'-monophosphate phosphoribohydrolase (187 aa).

Residues glutamate 80, arginine 98–lysine 99, glycine 115–glutamate 121, and threonine 127 contribute to the substrate site.

It belongs to the LOG family.

The enzyme catalyses N(6)-(dimethylallyl)adenosine 5'-phosphate + H2O = N(6)-dimethylallyladenine + D-ribose 5-phosphate. It catalyses the reaction 9-ribosyl-trans-zeatin 5'-phosphate + H2O = trans-zeatin + D-ribose 5-phosphate. Catalyzes the hydrolytic removal of ribose 5'-monophosphate from nitrogen N6-modified adenosines, the final step of bioactive cytokinin synthesis. In Mycobacterium marinum (strain ATCC BAA-535 / M), this protein is Cytokinin riboside 5'-monophosphate phosphoribohydrolase.